Here is a 240-residue protein sequence, read N- to C-terminus: ATP-dependent dethiobiotin synthetase BioD (240 aa).

15–20 (EIGKTF) lines the ATP pocket. Residue threonine 19 coordinates Mg(2+). Lysine 40 is an active-site residue. Residues aspartate 57, 118-121 (EGVG), and 178-179 (NR) contribute to the ATP site. Mg(2+)-binding residues include aspartate 57 and glutamate 118.

This sequence belongs to the dethiobiotin synthetase family. As to quaternary structure, homodimer. Mg(2+) is required as a cofactor.

It is found in the cytoplasm. It catalyses the reaction (7R,8S)-7,8-diammoniononanoate + CO2 + ATP = (4R,5S)-dethiobiotin + ADP + phosphate + 3 H(+). The protein operates within cofactor biosynthesis; biotin biosynthesis; biotin from 7,8-diaminononanoate: step 1/2. Functionally, catalyzes a mechanistically unusual reaction, the ATP-dependent insertion of CO2 between the N7 and N8 nitrogen atoms of 7,8-diaminopelargonic acid (DAPA, also called 7,8-diammoniononanoate) to form a ureido ring. In Burkholderia thailandensis (strain ATCC 700388 / DSM 13276 / CCUG 48851 / CIP 106301 / E264), this protein is ATP-dependent dethiobiotin synthetase BioD.